The following is a 902-amino-acid chain: Alanine--tRNA ligase (902 aa).

The Zn(2+) site is built by H567, H571, C671, and H675.

It belongs to the class-II aminoacyl-tRNA synthetase family. The cofactor is Zn(2+).

Its subcellular location is the cytoplasm. It catalyses the reaction tRNA(Ala) + L-alanine + ATP = L-alanyl-tRNA(Ala) + AMP + diphosphate. In terms of biological role, catalyzes the attachment of alanine to tRNA(Ala) in a two-step reaction: alanine is first activated by ATP to form Ala-AMP and then transferred to the acceptor end of tRNA(Ala). Also edits incorrectly charged Ser-tRNA(Ala) and Gly-tRNA(Ala) via its editing domain. In Mycoplasmoides gallisepticum (strain R(low / passage 15 / clone 2)) (Mycoplasma gallisepticum), this protein is Alanine--tRNA ligase.